A 336-amino-acid polypeptide reads, in one-letter code: GTPase Obg (336 aa).

Residues 1-159 (MKFLDETKVY…KTIWLRLKLI (159 aa)) form the Obg domain. In terms of domain architecture, OBG-type G spans 160–327 (ADAGLVGLPN…TLRALRSVID (168 aa)). Residues 166 to 173 (GLPNAGKS), 191 to 195 (FTTLH), 212 to 215 (DIPG), 279 to 282 (SQID), and 308 to 310 (SAV) each bind GTP. 2 residues coordinate Mg(2+): serine 173 and threonine 193.

This sequence belongs to the TRAFAC class OBG-HflX-like GTPase superfamily. OBG GTPase family. Monomer. The cofactor is Mg(2+).

It localises to the cytoplasm. In terms of biological role, an essential GTPase which binds GTP, GDP and possibly (p)ppGpp with moderate affinity, with high nucleotide exchange rates and a fairly low GTP hydrolysis rate. Plays a role in control of the cell cycle, stress response, ribosome biogenesis and in those bacteria that undergo differentiation, in morphogenesis control. This is GTPase Obg from Sinorhizobium medicae (strain WSM419) (Ensifer medicae).